The primary structure comprises 99 residues: MAAAAAIRGVRGKLGLREIRIHLCQRSPGSQGVRDFIEKRYVELKKANPDLPILIRECSDVQPKLWARYAFGQEKNVSLNNFSADQVTRALENVLSSKA.

The residue at position 2 (alanine 2) is an N-acetylalanine. Cysteine 24 and cysteine 58 are joined by a disulfide. Lysine 64 is modified (N6-acetyllysine; alternate). Position 64 is an N6-succinyllysine; alternate (lysine 64). Residue lysine 75 is modified to N6-acetyllysine.

The protein belongs to the complex I NDUFA2 subunit family. As to quaternary structure, complex I is composed of 45 different subunits.

It localises to the mitochondrion inner membrane. Functionally, accessory subunit of the mitochondrial membrane respiratory chain NADH dehydrogenase (Complex I), that is believed not to be involved in catalysis. Complex I functions in the transfer of electrons from NADH to the respiratory chain. The immediate electron acceptor for the enzyme is believed to be ubiquinone. In Bos taurus (Bovine), this protein is NADH dehydrogenase [ubiquinone] 1 alpha subcomplex subunit 2 (NDUFA2).